The following is a 349-amino-acid chain: Protein-glutamate methylesterase/protein-glutamine glutaminase (349 aa).

Residues 5 to 122 (RVLSVDDSAL…REGMLAYSEM (118 aa)) form the Response regulatory domain. At Asp56 the chain carries 4-aspartylphosphate. A CheB-type methylesterase domain is found at 152 to 344 (LLSSEKLIAI…QQMLAKISAG (193 aa)). Catalysis depends on residues Ser164, His190, and Asp286.

The protein belongs to the CheB family. In terms of processing, phosphorylated by CheA. Phosphorylation of the N-terminal regulatory domain activates the methylesterase activity.

Its subcellular location is the cytoplasm. It carries out the reaction [protein]-L-glutamate 5-O-methyl ester + H2O = L-glutamyl-[protein] + methanol + H(+). It catalyses the reaction L-glutaminyl-[protein] + H2O = L-glutamyl-[protein] + NH4(+). Functionally, involved in chemotaxis. Part of a chemotaxis signal transduction system that modulates chemotaxis in response to various stimuli. Catalyzes the demethylation of specific methylglutamate residues introduced into the chemoreceptors (methyl-accepting chemotaxis proteins or MCP) by CheR. Also mediates the irreversible deamidation of specific glutamine residues to glutamic acid. This Escherichia coli O157:H7 protein is Protein-glutamate methylesterase/protein-glutamine glutaminase.